The following is a 207-amino-acid chain: Guanylate kinase (207 aa).

The 181-residue stretch at 4-184 (GTLYIVSAPS…ALSDLKTIIR (181 aa)) folds into the Guanylate kinase-like domain. Residue 11–18 (APSGAGKS) coordinates ATP.

The protein belongs to the guanylate kinase family.

It localises to the cytoplasm. The catalysed reaction is GMP + ATP = GDP + ADP. Its function is as follows. Essential for recycling GMP and indirectly, cGMP. This Salmonella paratyphi A (strain ATCC 9150 / SARB42) protein is Guanylate kinase.